The following is a 141-amino-acid chain: MAKKEIGKIKLQIPAGSANPSPPVGPALGQHGVNIMEFCKAFNAKTQDQKGMIIPVIITVYQDRSFSFITKTPPASTLLLKAAKLQKGSGEPNKNKVGKVTKAQVKEIAELKAPDLTAADTEAAMKSIMGTARSMGIEVTE.

This sequence belongs to the universal ribosomal protein uL11 family. In terms of assembly, part of the ribosomal stalk of the 50S ribosomal subunit. Interacts with L10 and the large rRNA to form the base of the stalk. L10 forms an elongated spine to which L12 dimers bind in a sequential fashion forming a multimeric L10(L12)X complex. In terms of processing, one or more lysine residues are methylated.

Functionally, forms part of the ribosomal stalk which helps the ribosome interact with GTP-bound translation factors. In Maridesulfovibrio salexigens (strain ATCC 14822 / DSM 2638 / NCIMB 8403 / VKM B-1763) (Desulfovibrio salexigens), this protein is Large ribosomal subunit protein uL11.